The chain runs to 1018 residues: MKKSKEAVFEDKDYTEENPEQIFGNLYDGKLTVQDGKVKIAYDGDGNGYYIAFNSETGVYYDPYGDTEYDISVLFDANGNSFVFADAPTVEVLAGEQEQTEAEPDYLQYVGNEAYGYYDEAGEWVWSGYFEGDQWISTLPQTEAEEKQFGFEDNIETTPTASEDFGLEADVPAPEVAEPSYEVQPEVAAEPVYDVQPEVAVEPVGETTATVEPQAVEIQPEVVVEPIVESQLEQPVEVQAEMVQPEVAVEPQLEVSLDPIGETAPILEQVEPQAVQTQPEIPAEQSAVELQPEPVAEVQSEMVQPEAAAEPVTEAQQTEPTPVVETIAEITPQVVTEPVVAVVEHQPEAVAEPLPVEPAVAGVSELIPTEQVQPEVVVESTPVAEVQSEMVQPEVAVEPIVEPQPEQPVEVQPEVITTPEVASVLEVQPENPVVEVEQVVEPQPETPVEVQPEPVVETVQEAVAEPTQVVEPQPQAAPQPAVYEWNLTPEAAPVEQPEVIPVTVVESQATATAEPQPAVAPVADMDYVLHLTDTVKNQPQTAPVQPTTPIKIEVAESTPTVTTSPVEPTIAPPLFEIELNNTTSSDLPLVEVVDFKHNQHGAVGTHSFDDFTPPEVGMESKTHCHSNSEVVWRVSEPKTVPVPPAVSSINIQTVNRVVEPTISTPTTPVVESAPAIEIFVDTPPVETKEASSNVDVVQQPVKPLMPVMVEQLRTTELQPTTEINLFANSDINSIIAELKQGRSNPAINFDDIFKMSSYQMVVKKSFVQISDFITNSKTDITNRFLLIKKELQAELTRLIEENEQLKAEFLNAKDLSVYQKDELLRSLSNDFTIAHRPSDSYEQLQKSGELVRNIQKAILENESKIKNIQITLKELKAVYKLCSDTVLNGMAKLDSVLRFNKKEKDPLLLNSMETLSSFETEPQAIIEDLLDFSSSFDKMSNEQLDEFVYQNLDSGLNLDLDGFDHQLSSMNIHGLEPLDPMKLDDFDFETLTPDKTSNLSSILDDELMENGGDFNLDY.

2 coiled-coil regions span residues 782-815 (NRFL…AKDL) and 849-880 (ELVR…AVYK).

Post-translationally, phosphorylated mainly on serine residues.

It is found in the cell projection. It localises to the attachment organelle membrane. Its function is as follows. Component of the cytoskeleton-like structure which stabilizes the shape of the wall-less Mycoplasma. This cytoskeleton-like network of accessory proteins containing HMW proteins 1 to 5 allows the proper anchoring of cytadhesin proteins in the mycoplasmal membrane at the attachment organelle. The chain is Cytadherence high molecular weight protein 1 (hmw1) from Mycoplasma pneumoniae (strain ATCC 29342 / M129 / Subtype 1) (Mycoplasmoides pneumoniae).